The sequence spans 244 residues: Ras-related protein Rab-12 (244 aa).

M1 is subject to N-acetylmethionine. The span at 1–10 (MDPGAALQRR) shows a compositional bias: low complexity. Residues 1-37 (MDPGAALQRRAGGGGGLGAGSPALSGGQGRRRKQPPR) are disordered. Phosphoserine is present on residues S21 and S25. Residue G52 participates in GDP binding. GTP-binding residues include G52, V53, G54, K55, and T56. The GDP site is built by G54, K55, T56, and S57. T56 is a binding site for Mg(2+). 2 consecutive short sequence motifs (switch) follow at residues 65–79 (DTFC…GVDF) and 97–114 (DTAG…YYRS). GTP contacts are provided by S73 and T74. 2 residues coordinate Mg(2+): T74 and D97. Residue G100 coordinates GTP. Phosphoserine; by LRRK2 is present on S106. Positions 155, 156, 158, and 159 each coordinate GDP. GTP contacts are provided by N155, K156, and D158. The GTP site is built by S186, A187, and K188. GDP-binding residues include A187 and K188. The segment at 225 to 244 (QPEPEIPPELPPPRPHVRCC) is disordered. Positions 228–238 (PEIPPELPPPR) are enriched in pro residues. S-geranylgeranyl cysteine attachment occurs at residues C243 and C244.

This sequence belongs to the small GTPase superfamily. Rab family. As to quaternary structure, interacts with RABIF. Interacts with OPTN. Interacts with LRRK2; interaction facilitates phosphorylation of Ser-106. Interacts with GDI1, GDI2, CHM and CHML; these interactions are disrupted by phosphorylation on Ser-106. Interacts with RILPL1 and RILPL2; these interactions are dependent on phosphorylation of Ser-106. The cofactor is Mg(2+). In terms of processing, phosphorylation of Ser-106 in the switch II region by LRRK2 prevents the association of RAB regulatory proteins, including CHM, CHML and RAB GDP dissociation inhibitors GDI1 and GDI2.

Its subcellular location is the recycling endosome membrane. It localises to the lysosome membrane. The protein resides in the golgi apparatus membrane. It is found in the cytoplasmic vesicle. The protein localises to the autophagosome. The catalysed reaction is GTP + H2O = GDP + phosphate + H(+). Regulated by guanine nucleotide exchange factors (GEFs) including DENND3 which promote the exchange of bound GDP for free GTP. Regulated by GTPase activating proteins (GAPs) which increase the GTP hydrolysis activity. Inhibited by GDP dissociation inhibitors (GDIs). The small GTPases Rab are key regulators of intracellular membrane trafficking, from the formation of transport vesicles to their fusion with membranes. Rabs cycle between an inactive GDP-bound form and an active GTP-bound form that is able to recruit to membranes different sets of downstream effectors directly responsible for vesicle formation, movement, tethering and fusion. RAB12 may play a role in protein transport from recycling endosomes to lysosomes regulating, for instance, the degradation of the transferrin receptor. Involved in autophagy. The polypeptide is Ras-related protein Rab-12 (Homo sapiens (Human)).